The following is an 88-amino-acid chain: Small ribosomal subunit protein bS20 (88 aa).

The protein belongs to the bacterial ribosomal protein bS20 family.

Its function is as follows. Binds directly to 16S ribosomal RNA. The polypeptide is Small ribosomal subunit protein bS20 (Aromatoleum aromaticum (strain DSM 19018 / LMG 30748 / EbN1) (Azoarcus sp. (strain EbN1))).